A 638-amino-acid chain; its full sequence is 1-deoxy-D-xylulose-5-phosphate synthase (638 aa).

Thiamine diphosphate is bound by residues His79 and 120 to 122; that span reads AHS. Asp151 lines the Mg(2+) pocket. Thiamine diphosphate-binding positions include 152–153, Asn180, Tyr289, and Glu371; that span reads GA. Asn180 is a binding site for Mg(2+).

The protein belongs to the transketolase family. DXPS subfamily. As to quaternary structure, homodimer. Mg(2+) is required as a cofactor. Thiamine diphosphate serves as cofactor.

The catalysed reaction is D-glyceraldehyde 3-phosphate + pyruvate + H(+) = 1-deoxy-D-xylulose 5-phosphate + CO2. Its pathway is metabolic intermediate biosynthesis; 1-deoxy-D-xylulose 5-phosphate biosynthesis; 1-deoxy-D-xylulose 5-phosphate from D-glyceraldehyde 3-phosphate and pyruvate: step 1/1. Catalyzes the acyloin condensation reaction between C atoms 2 and 3 of pyruvate and glyceraldehyde 3-phosphate to yield 1-deoxy-D-xylulose-5-phosphate (DXP). The sequence is that of 1-deoxy-D-xylulose-5-phosphate synthase from Rhizobium leguminosarum bv. trifolii (strain WSM2304).